The primary structure comprises 399 residues: S-adenosylmethionine synthase (399 aa).

Position 17 (His-17) interacts with ATP. Residue Asp-19 coordinates Mg(2+). Glu-45 is a K(+) binding site. Residues Glu-58 and Gln-101 each coordinate L-methionine. A flexible loop region spans residues 101–111; sequence QSPDIAQGVDE. ATP contacts are provided by residues 177–179, 244–245, Asp-253, 259–260, Ala-276, and Lys-280; these read DAK, RF, and RK. Residue Asp-253 participates in L-methionine binding. Position 284 (Lys-284) interacts with L-methionine.

It belongs to the AdoMet synthase family. In terms of assembly, homotetramer; dimer of dimers. Mg(2+) serves as cofactor. The cofactor is K(+).

The protein localises to the cytoplasm. The enzyme catalyses L-methionine + ATP + H2O = S-adenosyl-L-methionine + phosphate + diphosphate. It participates in amino-acid biosynthesis; S-adenosyl-L-methionine biosynthesis; S-adenosyl-L-methionine from L-methionine: step 1/1. Functionally, catalyzes the formation of S-adenosylmethionine (AdoMet) from methionine and ATP. The overall synthetic reaction is composed of two sequential steps, AdoMet formation and the subsequent tripolyphosphate hydrolysis which occurs prior to release of AdoMet from the enzyme. This chain is S-adenosylmethionine synthase, found in Listeria monocytogenes serovar 1/2a (strain ATCC BAA-679 / EGD-e).